A 500-amino-acid chain; its full sequence is NAD(P)H-quinone oxidoreductase chain 4, chloroplastic (500 aa).

The next 14 membrane-spanning stretches (helical) occupy residues 4–24 (FPWL…MLFL), 35–55 (YTIC…CYNF), 87–107 (IGTI…AFPV), 113–130 (LFHF…GSFS), 134–154 (LLLF…LLSM), 167–187 (FILY…GISL), 211–231 (ILFY…IPLH), 242–262 (HYST…YGLV), 272–292 (AHSL…IYAA), 305–325 (IAYS…SITD), 330–350 (GAIL…FLAG), 386–406 (LALP…GIIT), 416–436 (ILII…LLSM), and 462–482 (LFLS…PDFV).

It belongs to the complex I subunit 4 family.

It localises to the plastid. The protein localises to the chloroplast thylakoid membrane. The catalysed reaction is a plastoquinone + NADH + (n+1) H(+)(in) = a plastoquinol + NAD(+) + n H(+)(out). It carries out the reaction a plastoquinone + NADPH + (n+1) H(+)(in) = a plastoquinol + NADP(+) + n H(+)(out). In Draba nemorosa (Woodland whitlowgrass), this protein is NAD(P)H-quinone oxidoreductase chain 4, chloroplastic.